The chain runs to 212 residues: Ribosomal RNA large subunit methyltransferase E (212 aa).

S-adenosyl-L-methionine contacts are provided by G56, W58, D78, D94, and D117. The Proton acceptor role is filled by K157.

Belongs to the class I-like SAM-binding methyltransferase superfamily. RNA methyltransferase RlmE family.

The protein resides in the cytoplasm. It carries out the reaction uridine(2552) in 23S rRNA + S-adenosyl-L-methionine = 2'-O-methyluridine(2552) in 23S rRNA + S-adenosyl-L-homocysteine + H(+). Functionally, specifically methylates the uridine in position 2552 of 23S rRNA at the 2'-O position of the ribose in the fully assembled 50S ribosomal subunit. In Ehrlichia chaffeensis (strain ATCC CRL-10679 / Arkansas), this protein is Ribosomal RNA large subunit methyltransferase E.